Reading from the N-terminus, the 106-residue chain is Urease subunit beta (106 aa).

It belongs to the urease beta subunit family. Heterotrimer of UreA (gamma), UreB (beta) and UreC (alpha) subunits. Three heterotrimers associate to form the active enzyme.

The protein localises to the cytoplasm. The enzyme catalyses urea + 2 H2O + H(+) = hydrogencarbonate + 2 NH4(+). It functions in the pathway nitrogen metabolism; urea degradation; CO(2) and NH(3) from urea (urease route): step 1/1. The chain is Urease subunit beta from Prochlorococcus marinus (strain MIT 9301).